The chain runs to 319 residues: Acetyl esterase (319 aa).

The Involved in the stabilization of the negatively charged intermediate by the formation of the oxyanion hole signature appears at 91–93; that stretch reads HGG. Active-site residues include serine 165, aspartate 262, and histidine 292.

It belongs to the 'GDXG' lipolytic enzyme family. Homodimer. Interacts with MalT and MelA.

Its subcellular location is the cytoplasm. Functionally, displays esterase activity towards short chain fatty esters (acyl chain length of up to 8 carbons). Able to hydrolyze triacetylglycerol (triacetin) and tributyrylglycerol (tributyrin), but not trioleylglycerol (triolein) or cholesterol oleate. Negatively regulates MalT activity by antagonizing maltotriose binding. Inhibits MelA galactosidase activity. The protein is Acetyl esterase of Escherichia coli O8 (strain IAI1).